Consider the following 167-residue polypeptide: Ureidoglycolate lyase (167 aa).

The protein belongs to the ureidoglycolate lyase family. In terms of assembly, homodimer. The cofactor is Ni(2+).

The catalysed reaction is (S)-ureidoglycolate = urea + glyoxylate. The protein operates within nitrogen metabolism; (S)-allantoin degradation. Functionally, catalyzes the catabolism of the allantoin degradation intermediate (S)-ureidoglycolate, generating urea and glyoxylate. Involved in the utilization of allantoin as nitrogen source. This is Ureidoglycolate lyase from Pseudomonas fluorescens (strain Pf0-1).